The sequence spans 714 residues: Centromere/kinetochore protein zw10 (714 aa).

It belongs to the ZW10 family.

It localises to the cytoplasm. Its subcellular location is the nucleus. It is found in the chromosome. The protein resides in the centromere. The protein localises to the kinetochore. Functionally, required for accurate chromosome segregation. This is Centromere/kinetochore protein zw10 (mit(1)15) from Drosophila grimshawi (Hawaiian fruit fly).